The primary structure comprises 405 residues: MRCAPTAGAALVLCAATAGLLSAQGRPAQPEPPRFASWDEMNLLAHGLLQLGHGLREHVERTRGQLGALERRMAACGNACQGPKGTDPKDRVPEGQAPETLQSLQTQLKAQNSKIQQLFQKVAQQQRYLSKQNLRIQNLQSQIDLLTPTHLDNGVDKTSRGKRLPKMAQLIGLTPNATRLHRPPRDCQELFQEGERHSGLFQIQPLGSPPFLVNCEMTSDGGWTVIQRRLNGSVDFNQSWEAYKDGFGDPQGEFWLGLEKMHSITGDRGSQLAVQLQDWDGNAKLLQFPIHLGGEDTAYSLQLTEPTANELGATNVSPNGLSLPFSTWDQDHDLRGDLNCAKSLSGGWWFGTCSHSNLNGQYFHSIPRQRQQRKKGIFWKTWKGRYYPLQATTLLIQPMEATAAS.

The first 23 residues, 1–23 (MRCAPTAGAALVLCAATAGLLSA), serve as a signal peptide directing secretion. The stretch at 54 to 146 (GLREHVERTR…QNLQSQIDLL (93 aa)) forms a coiled coil. Residue Asn176 is glycosylated (N-linked (GlcNAc...) asparagine). Residues 178 to 400 (TRLHRPPRDC…ATTLLIQPME (223 aa)) enclose the Fibrinogen C-terminal domain. The cysteines at positions 187 and 215 are disulfide-linked. N-linked (GlcNAc...) asparagine glycans are attached at residues Asn231 and Asn237. Residues Cys340 and Cys353 are joined by a disulfide bond.

As to quaternary structure, homooligomer; disulfide-linked via Cys residues in the N-terminal part of the protein. The homooligomer undergoes proteolytic processing to release its carboxyl fibrinogen-like domain, which circulates as a monomer. The homooligomer unprocessed form is able to interact with the extracellular matrix. N-glycosylated. Post-translationally, forms disulfide-linked dimers and tetramers. In terms of processing, cleaved into a smaller N-terminal chain and a larger chain that contains the fibrinogen C-terminal domain; both cleaved and uncleaved forms are detected in the extracellular space. The cleaved form is not present within the cell.

Its subcellular location is the secreted. It is found in the extracellular space. The protein resides in the extracellular matrix. Mediates inactivation of the lipoprotein lipase LPL, and thereby plays a role in the regulation of triglyceride clearance from the blood serum and in lipid metabolism. May also play a role in regulating glucose homeostasis and insulin sensitivity. Inhibits proliferation, migration, and tubule formation of endothelial cells and reduces vascular leakage. Upon heterologous expression, inhibits the adhesion of endothelial cell to the extracellular matrix (ECM), and inhibits the reorganization of the actin cytoskeleton, formation of actin stress fibers and focal adhesions in endothelial cells that have adhered to ANGPTL4-containing ECM (in vitro). Depending on context, may modulate tumor-related angiogenesis. In terms of biological role, mediates inactivation of the lipoprotein lipase LPL, and thereby plays an important role in the regulation of triglyceride clearance from the blood serum and in lipid metabolism. Has higher activity in LPL inactivation than the uncleaved protein. This chain is Angiopoietin-related protein 4 (Angptl4), found in Rattus norvegicus (Rat).